The chain runs to 191 residues: Protein GrpE (191 aa).

The span at 1-15 shows a compositional bias: basic and acidic residues; it reads MGKEEKNNIEDKALD. The tract at residues 1–35 is disordered; sequence MGKEEKNNIEDKALDNEQEMDQESTSKAVEELSIE.

It belongs to the GrpE family. As to quaternary structure, homodimer.

Its subcellular location is the cytoplasm. Its function is as follows. Participates actively in the response to hyperosmotic and heat shock by preventing the aggregation of stress-denatured proteins, in association with DnaK and GrpE. It is the nucleotide exchange factor for DnaK and may function as a thermosensor. Unfolded proteins bind initially to DnaJ; upon interaction with the DnaJ-bound protein, DnaK hydrolyzes its bound ATP, resulting in the formation of a stable complex. GrpE releases ADP from DnaK; ATP binding to DnaK triggers the release of the substrate protein, thus completing the reaction cycle. Several rounds of ATP-dependent interactions between DnaJ, DnaK and GrpE are required for fully efficient folding. In Francisella philomiragia subsp. philomiragia (strain ATCC 25017 / CCUG 19701 / FSC 153 / O#319-036), this protein is Protein GrpE.